Reading from the N-terminus, the 334-residue chain is Geranylgeranyl pyrophosphate synthase ltmG (334 aa).

Lys53, Arg56, and His85 together coordinate isopentenyl diphosphate. Mg(2+) is bound by residues Asp92 and Asp96. Arg101 is a binding site for dimethylallyl diphosphate. Arg102 is an isopentenyl diphosphate binding site. Lys179, Thr180, and Gln213 together coordinate dimethylallyl diphosphate. Residue Asp216 coordinates Mg(2+). Dimethylallyl diphosphate is bound by residues Asn220, Lys230, and Lys240.

The protein belongs to the FPP/GGPP synthase family. Mg(2+) serves as cofactor.

It catalyses the reaction isopentenyl diphosphate + dimethylallyl diphosphate = (2E)-geranyl diphosphate + diphosphate. The catalysed reaction is isopentenyl diphosphate + (2E)-geranyl diphosphate = (2E,6E)-farnesyl diphosphate + diphosphate. It carries out the reaction isopentenyl diphosphate + (2E,6E)-farnesyl diphosphate = (2E,6E,10E)-geranylgeranyl diphosphate + diphosphate. Its pathway is secondary metabolite biosynthesis. In terms of biological role, geranylgeranyl pyrophosphate synthase; part of the gene cluster that mediates the biosynthesis of lolitrems, indole-diterpene mycotoxins that are potent tremorgens in mammals, and are synthesized by clavicipitaceous fungal endophytes in association with their grass hosts. The geranylgeranyl diphosphate (GGPP) synthase ltmG is proposed to catalyze the first step in lolitrem biosynthesis. LtmG catalyzes a series of iterative condensations of isopentenyl diphosphate (IPP) with dimethylallyl diphosphate (DMAPP), geranyl diphosphate (GPP), and farnesyl diphosphate (FPP), to form GGPP. GGPP then condenses with indole-3-glycerol phosphate to form 3-geranylgeranylindole, an acyclic intermediate, to be incorporated into paxilline. Either ltmG or ltmC could be responsible for this step, as both are putative prenyl transferases. The FAD-dependent monooxygenase ltmM then catalyzes the epoxidation of the two terminal alkenes of the geranylgeranyl moiety, which is subsequently cyclized by ltmB, to paspaline. The cytochrome P450 monooxygenases ltmQ and ltmP can sequentially oxidize paspaline to terpendole E and terpendole F. Alternatively, ltmP converts paspaline to an intermediate which is oxidized by ltmQ to terpendole F. LtmF, ltmK, ltmE and ltmJ appear to be unique to the epichloe endophytes. The prenyltransferase ltmF is involved in the 27-hydroxyl-O-prenylation. The cytochrome P450 monooxygenase ltmK is required for the oxidative acetal ring formation. The multi-functional prenyltransferase ltmE is required for C20- and C21-prenylations of the indole ring of paspalanes and acts together with the cytochrome P450 monooxygenase ltmJ to yield lolitremanes by multiple oxidations and ring closures. The stereoisomer pairs of lolitriol and lolitrem N or lolitrem B and lolitrem F may be attributed to variations in the way in which ring closure can occur under the action of ltmJ. While the major product of this pathway is lolitrem B, the prenyl transferases and cytochrome P450 monooxygenases identified in this pathway have a remarkable versatility in their regio- and stereo-specificities to generate a diverse range of metabolites that are products of a metabolic grid rather than a linear pathway. The chain is Geranylgeranyl pyrophosphate synthase ltmG from Epichloe festucae (strain Fl1).